The following is a 408-amino-acid chain: LL-diaminopimelate aminotransferase (408 aa).

Residues Tyr-15 and Gly-42 each contribute to the substrate site. Pyridoxal 5'-phosphate-binding positions include Tyr-72, 108-109, Tyr-132, Asn-187, Tyr-218, and 246-248; these read SK and SFS. Positions 109, 132, and 187 each coordinate substrate. Lys-249 carries the N6-(pyridoxal phosphate)lysine modification. Residues Arg-257 and Asn-292 each coordinate pyridoxal 5'-phosphate. Asn-292 and Arg-388 together coordinate substrate.

This sequence belongs to the class-I pyridoxal-phosphate-dependent aminotransferase family. LL-diaminopimelate aminotransferase subfamily. As to quaternary structure, homodimer. Pyridoxal 5'-phosphate is required as a cofactor.

The catalysed reaction is (2S,6S)-2,6-diaminopimelate + 2-oxoglutarate = (S)-2,3,4,5-tetrahydrodipicolinate + L-glutamate + H2O + H(+). Its pathway is amino-acid biosynthesis; L-lysine biosynthesis via DAP pathway; LL-2,6-diaminopimelate from (S)-tetrahydrodipicolinate (aminotransferase route): step 1/1. In terms of biological role, involved in the synthesis of meso-diaminopimelate (m-DAP or DL-DAP), required for both lysine and peptidoglycan biosynthesis. Catalyzes the direct conversion of tetrahydrodipicolinate to LL-diaminopimelate. The sequence is that of LL-diaminopimelate aminotransferase from Synechococcus sp. (strain CC9311).